Here is a 370-residue protein sequence, read N- to C-terminus: MPHQQMLMLFGLLPVATNISTWWNFGSMLLTCSALQVLTGFFLAVHYTANIDLAFSSVVHIMRDVPYGWMMQNLHAMGASMFFICIYIHIARGLYYGSYLNKETWLSGTTLLIMLMATAFFGYVLPWGQMSFWAATVITNLLTAIPYLGTTMTTWLWGGFAINDPTLTRFFALHFILPFGIISFSSLHVMLLHEEGSSNPLGTNSDIDKIPFHPYHTYKDLFMLSVMITLLLTMISFYPDIFNDPDNFSKANPLVTPQHIKPEWYFLFAYGILRSIPNKLGGALALAMSIMILLTMPFTHTSKLRSMMFRPFMQLMFWTFAATFLVITWTATKPVEPPFTMISQVAALIYFLFFISNPIMGWMENKIMKV.

The next 4 membrane-spanning stretches (helical) occupy residues 25–45 (FGSM…FLAV), 69–90 (WMMQ…YIHI), 105–125 (WLSG…GYVL), and 170–190 (FFAL…LHVM). Heme b is bound by residues His75 and His89. Heme b is bound by residues His174 and His188. Residue His193 coordinates a ubiquinone. 4 helical membrane passes run 218-238 (YKDL…ISFY), 280-300 (LGGA…PFTH), 312-332 (FMQL…WTAT), and 339-358 (FTMI…ISNP).

Belongs to the cytochrome b family. In terms of assembly, the cytochrome bc1 complex contains 3 respiratory subunits (MT-CYB, CYC1 and UQCRFS1), 2 core proteins (UQCRC1 and UQCRC2) and probably 6 low-molecular weight proteins. It depends on heme b as a cofactor.

The protein resides in the mitochondrion inner membrane. Its function is as follows. Component of the ubiquinol-cytochrome c reductase complex (complex III or cytochrome b-c1 complex) that is part of the mitochondrial respiratory chain. The b-c1 complex mediates electron transfer from ubiquinol to cytochrome c. Contributes to the generation of a proton gradient across the mitochondrial membrane that is then used for ATP synthesis. This is Cytochrome b (MT-CYB) from Corallus hortulanus enydris (Garden tree boa).